We begin with the raw amino-acid sequence, 463 residues long: Phosphomannomutase (463 aa).

S103 acts as the Phosphoserine intermediate in catalysis. S103, D248, D250, and D252 together coordinate Mg(2+).

The protein belongs to the phosphohexose mutase family. Requires Mg(2+) as cofactor.

It localises to the cell membrane. It carries out the reaction alpha-D-mannose 1-phosphate = D-mannose 6-phosphate. It participates in nucleotide-sugar biosynthesis; GDP-alpha-D-mannose biosynthesis; alpha-D-mannose 1-phosphate from D-fructose 6-phosphate: step 2/2. It functions in the pathway bacterial outer membrane biogenesis; LPS O-antigen biosynthesis. Involved in GDP-mannose biosynthesis which serves as the activated sugar nucleotide precursor for mannose residues in cell surface polysaccharides. This chain is Phosphomannomutase (rfbB), found in Vibrio cholerae serotype O1 (strain ATCC 39315 / El Tor Inaba N16961).